We begin with the raw amino-acid sequence, 195 residues long: dITP/XTP pyrophosphatase (195 aa).

8-13 (SNNQGK) is a binding site for substrate. Mg(2+) is bound by residues glutamate 39 and aspartate 68. The Proton acceptor role is filled by aspartate 68. Residues serine 69, 149-152 (FGYD), lysine 172, and 177-178 (HR) contribute to the substrate site.

Belongs to the HAM1 NTPase family. In terms of assembly, homodimer. Mg(2+) is required as a cofactor.

The catalysed reaction is XTP + H2O = XMP + diphosphate + H(+). It catalyses the reaction dITP + H2O = dIMP + diphosphate + H(+). It carries out the reaction ITP + H2O = IMP + diphosphate + H(+). Its function is as follows. Pyrophosphatase that catalyzes the hydrolysis of nucleoside triphosphates to their monophosphate derivatives, with a high preference for the non-canonical purine nucleotides XTP (xanthosine triphosphate), dITP (deoxyinosine triphosphate) and ITP. Seems to function as a house-cleaning enzyme that removes non-canonical purine nucleotides from the nucleotide pool, thus preventing their incorporation into DNA/RNA and avoiding chromosomal lesions. In Staphylococcus aureus (strain COL), this protein is dITP/XTP pyrophosphatase.